A 371-amino-acid polypeptide reads, in one-letter code: Histidinol-phosphate aminotransferase (371 aa).

Lys228 is modified (N6-(pyridoxal phosphate)lysine).

It belongs to the class-II pyridoxal-phosphate-dependent aminotransferase family. Histidinol-phosphate aminotransferase subfamily. Homodimer. It depends on pyridoxal 5'-phosphate as a cofactor.

It carries out the reaction L-histidinol phosphate + 2-oxoglutarate = 3-(imidazol-4-yl)-2-oxopropyl phosphate + L-glutamate. Its pathway is amino-acid biosynthesis; L-histidine biosynthesis; L-histidine from 5-phospho-alpha-D-ribose 1-diphosphate: step 7/9. The sequence is that of Histidinol-phosphate aminotransferase from Thermosynechococcus vestitus (strain NIES-2133 / IAM M-273 / BP-1).